Here is a 482-residue protein sequence, read N- to C-terminus: Retrovirus-related Pol polyprotein from type-1 retrotransposable element R2 (482 aa).

Residues 1 to 84 (AYADDLILFA…DYFKYLGSRY (84 aa)) enclose the Reverse transcriptase domain. Positions 208–482 (QIPAVEKFYQ…ATGGRGRGDI (275 aa)) are nucleic acid-binding endonuclease.

It carries out the reaction DNA(n) + a 2'-deoxyribonucleoside 5'-triphosphate = DNA(n+1) + diphosphate. This is Retrovirus-related Pol polyprotein from type-1 retrotransposable element R2 from Popillia japonica (Japanese beetle).